A 280-amino-acid chain; its full sequence is Probable S-methyl-5'-thioinosine phosphorylase (280 aa).

Residues Thr-8 and 50 to 51 contribute to the phosphate site; that span reads RH. Met-175 provides a ligand contact to substrate. Thr-176 provides a ligand contact to phosphate. 199–201 contributes to the substrate binding site; sequence NYA.

This sequence belongs to the PNP/MTAP phosphorylase family. MTAP subfamily. As to quaternary structure, homotrimer.

The enzyme catalyses S-methyl-5'-thioinosine + phosphate = 5-(methylsulfanyl)-alpha-D-ribose 1-phosphate + hypoxanthine. It participates in purine metabolism; purine nucleoside salvage. Functionally, catalyzes the reversible phosphorylation of S-methyl-5'-thioinosine (MTI) to hypoxanthine and 5-methylthioribose-1-phosphate. Involved in the breakdown of S-methyl-5'-thioadenosine (MTA), a major by-product of polyamine biosynthesis. Catabolism of (MTA) occurs via deamination to MTI and phosphorolysis to hypoxanthine. The protein is Probable S-methyl-5'-thioinosine phosphorylase of Methanothermobacter thermautotrophicus (strain ATCC 29096 / DSM 1053 / JCM 10044 / NBRC 100330 / Delta H) (Methanobacterium thermoautotrophicum).